A 126-amino-acid polypeptide reads, in one-letter code: MSDPRYQIDVSVVTRFLADQSQPEQNRFAFAYTITVKNNGLVPAKLLSRHWVITDGDGQVEEVRGAGVVGQQPLIDIGASHTYSSGTVMTSKVGTMQGSYQMKATDGKLFDAIIAPFRLAVPGALH.

An ApaG domain is found at 2–126 (SDPRYQIDVS…FRLAVPGALH (125 aa)).

The sequence is that of Protein ApaG from Pseudomonas fluorescens (strain SBW25).